Consider the following 249-residue polypeptide: MEIKHLLFLVAAACLLPVLSMKRKSAKKLFNKLVTDLPNVQQEIVNIHNTLRRGVVPPASNMLKMSWSEEAAQNAKIFSRYCDMTESNPLERRLPNTFCGENRNMTSYPVSWSSVIGVWYSESKYFRYGLWPSTDDDISTDRYTQIVWATSYLIGCAIAPCRHRGSPRYFYVCHYCHEGNDPETKHEPYKKGVPCEACPNNCEDKLCTNPCIYYDEYTDCSLEVRFLGCNHSTPRMFCKATCLCDTEIK.

The signal sequence occupies residues 1-20 (MEIKHLLFLVAAACLLPVLS). Residues 45 to 175 (VNIHNTLRRG…SPRYFYVCHY (131 aa)) form the SCP domain. N-linked (GlcNAc...) asparagine glycosylation is present at Asn-104. Disulfide bonds link Cys-195-Cys-202, Cys-198-Cys-207, Cys-211-Cys-244, Cys-220-Cys-238, and Cys-229-Cys-242. The 34-residue stretch at 211–244 (CIYYDEYTDCSLEVRFLGCNHSTPRMFCKATCLC) folds into the ShKT domain. An N-linked (GlcNAc...) asparagine glycan is attached at Asn-230.

Belongs to the CRISP family. Expressed in all the regions of the epididymis except the caput and is not detected in the testis, prostate, seminal vesicle, and brain.

Functionally, may have a role in sperm-egg fusion and maturation. This Macaca mulatta (Rhesus macaque) protein is Cysteine-rich secretory protein 1 (CRISP1).